We begin with the raw amino-acid sequence, 360 residues long: UDP-N-acetylglucosamine--N-acetylmuramyl-(pentapeptide) pyrophosphoryl-undecaprenol N-acetylglucosamine transferase (360 aa).

UDP-N-acetyl-alpha-D-glucosamine contacts are provided by residues Thr15 to Gly17, Asn128, Arg164, Ser192, Ile247, and Gln292.

Belongs to the glycosyltransferase 28 family. MurG subfamily.

It localises to the cell inner membrane. The enzyme catalyses di-trans,octa-cis-undecaprenyl diphospho-N-acetyl-alpha-D-muramoyl-L-alanyl-D-glutamyl-meso-2,6-diaminopimeloyl-D-alanyl-D-alanine + UDP-N-acetyl-alpha-D-glucosamine = di-trans,octa-cis-undecaprenyl diphospho-[N-acetyl-alpha-D-glucosaminyl-(1-&gt;4)]-N-acetyl-alpha-D-muramoyl-L-alanyl-D-glutamyl-meso-2,6-diaminopimeloyl-D-alanyl-D-alanine + UDP + H(+). It functions in the pathway cell wall biogenesis; peptidoglycan biosynthesis. In terms of biological role, cell wall formation. Catalyzes the transfer of a GlcNAc subunit on undecaprenyl-pyrophosphoryl-MurNAc-pentapeptide (lipid intermediate I) to form undecaprenyl-pyrophosphoryl-MurNAc-(pentapeptide)GlcNAc (lipid intermediate II). This is UDP-N-acetylglucosamine--N-acetylmuramyl-(pentapeptide) pyrophosphoryl-undecaprenol N-acetylglucosamine transferase from Blochmanniella floridana.